The following is a 204-amino-acid chain: Inactive ribonuclease-like protein 9 (204 aa).

Residues 1-26 form the signal peptide; sequence MMRTLITIHPLPLLLLLQQLLQPVQF. 3 disulfides stabilise this stretch: Cys97–Cys152, Cys115–Cys167, and Cys122–Cys129. Residues Asn130 and Asn142 are each glycosylated (N-linked (GlcNAc...) asparagine).

It belongs to the pancreatic ribonuclease family.

Its subcellular location is the secreted. Its function is as follows. Does not exhibit any ribonuclease activity. This chain is Inactive ribonuclease-like protein 9 (RNASE9), found in Symphalangus syndactylus (Siamang).